We begin with the raw amino-acid sequence, 303 residues long: 4-hydroxy-tetrahydrodipicolinate synthase (303 aa).

Thr-57 lines the pyruvate pocket. Tyr-143 functions as the Proton donor/acceptor in the catalytic mechanism. Lys-171 acts as the Schiff-base intermediate with substrate in catalysis. A pyruvate-binding site is contributed by Ile-211.

Belongs to the DapA family. In terms of assembly, homotetramer; dimer of dimers.

It is found in the cytoplasm. It catalyses the reaction L-aspartate 4-semialdehyde + pyruvate = (2S,4S)-4-hydroxy-2,3,4,5-tetrahydrodipicolinate + H2O + H(+). Its pathway is amino-acid biosynthesis; L-lysine biosynthesis via DAP pathway; (S)-tetrahydrodipicolinate from L-aspartate: step 3/4. Catalyzes the condensation of (S)-aspartate-beta-semialdehyde [(S)-ASA] and pyruvate to 4-hydroxy-tetrahydrodipicolinate (HTPA). This is 4-hydroxy-tetrahydrodipicolinate synthase from Bifidobacterium animalis subsp. lactis (strain AD011).